We begin with the raw amino-acid sequence, 894 residues long: Translation factor GUF1 homolog, mitochondrial (894 aa).

The interval 157–189 is disordered; sequence EDEGLDGGPPPGMEAKKSSSSSSSNNVHSNCSD. Low complexity predominate over residues 174 to 188; that stretch reads SSSSSSSNNVHSNCS. In terms of domain architecture, tr-type G spans 199–376; sequence ENIRNFCILA…RIVSEIPSPA (178 aa). GTP contacts are provided by residues 208-215, 269-273, and 323-326; these read AHIDSGKS, DTPGH, and NKID. The tract at residues 649 to 674 is disordered; that stretch reads DHDDCNDNGGSNSDDRSDRSGKNPPD.

This sequence belongs to the TRAFAC class translation factor GTPase superfamily. Classic translation factor GTPase family. LepA subfamily.

The protein localises to the mitochondrion inner membrane. It catalyses the reaction GTP + H2O = GDP + phosphate + H(+). In terms of biological role, promotes mitochondrial protein synthesis. May act as a fidelity factor of the translation reaction, by catalyzing a one-codon backward translocation of tRNAs on improperly translocated ribosomes. Binds to mitochondrial ribosomes in a GTP-dependent manner. The polypeptide is Translation factor GUF1 homolog, mitochondrial (Plasmodium knowlesi (strain H)).